Reading from the N-terminus, the 359-residue chain is NAC domain-containing protein 45 (359 aa).

The NAC domain maps to 19–185 (LPPGFRFHPT…EWVVCKVFHK (167 aa)). A DNA-binding region spans residues 130–191 (VGMKKTLVFY…VFHKKGDDRE (62 aa)).

As to expression, expressed in roots. Expressed at low levels in leaves, stems and panicles.

The protein localises to the nucleus. Functionally, transcription activator involved in responses to drought stress and salt stress. Transactivates the stress response genes LEA19 and PM19L. The chain is NAC domain-containing protein 45 from Oryza sativa subsp. japonica (Rice).